Reading from the N-terminus, the 104-residue chain is UPF0145 protein GTNG_1265 (104 aa).

The protein belongs to the UPF0145 family.

The sequence is that of UPF0145 protein GTNG_1265 from Geobacillus thermodenitrificans (strain NG80-2).